The chain runs to 322 residues: MLKIQDFEFVKVVGVGAFGKVHLVRLKSSPTSVFAMKMLDFGEILRQRLADQLENEISILKRIYGCPFVAKLYSTDFHGGKVGLIMEYVGGGELFYWLKKCGRFDEQMARFYAAEIISALRFIHGRGILYRDLKPENILITSTGHIKLIDFGFSVYESENIYMISGTPEYMSPEKLRSEDDGRASDYWGLGVMIYEMLCGDPPFYDSSADAIYHKILESNVVFPHYVSPVARCLITGLLDKNRATRLGTKGICEIMGHPFFKGIDWHEVESRRIEPPFIPNPNTVLSSLASSGELKGTDDAETVVLKPYKHIKHLYKVSKGL.

Positions 7–261 (FEFVKVVGVG…ICEIMGHPFF (255 aa)) constitute a Protein kinase domain. Residues 13 to 21 (VGVGAFGKV) and Lys37 contribute to the ATP site. Asp132 (proton acceptor) is an active-site residue. One can recognise an AGC-kinase C-terminal domain in the interval 262–322 (KGIDWHEVES…KHLYKVSKGL (61 aa)).

It belongs to the protein kinase superfamily. AGC Ser/Thr protein kinase family. cAMP subfamily.

The enzyme catalyses L-seryl-[protein] + ATP = O-phospho-L-seryl-[protein] + ADP + H(+). It carries out the reaction L-threonyl-[protein] + ATP = O-phospho-L-threonyl-[protein] + ADP + H(+). In Encephalitozoon cuniculi (strain GB-M1) (Microsporidian parasite), this protein is Probable cAMP-dependent protein kinase catalytic subunit.